Consider the following 194-residue polypeptide: Cell division protein SepF (194 aa).

Disordered regions lie at residues 35–54 (DHRS…DSSP) and 159–194 (SAPS…AGGL).

The protein belongs to the SepF family. As to quaternary structure, homodimer. Interacts with FtsZ.

The protein resides in the cytoplasm. Cell division protein that is part of the divisome complex and is recruited early to the Z-ring. Probably stimulates Z-ring formation, perhaps through the cross-linking of FtsZ protofilaments. Its function overlaps with FtsA. This Prochlorococcus marinus (strain MIT 9313) protein is Cell division protein SepF.